We begin with the raw amino-acid sequence, 431 residues long: 5-methylthioadenosine/S-adenosylhomocysteine deaminase (431 aa).

Positions 66 and 68 each coordinate Zn(2+). 3 residues coordinate substrate: Glu-95, Arg-147, and His-185. His-212 lines the Zn(2+) pocket. 2 residues coordinate substrate: Glu-215 and Asp-300. Asp-300 serves as a coordination point for Zn(2+).

This sequence belongs to the metallo-dependent hydrolases superfamily. MTA/SAH deaminase family. Zn(2+) serves as cofactor.

It catalyses the reaction S-adenosyl-L-homocysteine + H2O + H(+) = S-inosyl-L-homocysteine + NH4(+). The catalysed reaction is S-methyl-5'-thioadenosine + H2O + H(+) = S-methyl-5'-thioinosine + NH4(+). In terms of biological role, catalyzes the deamination of 5-methylthioadenosine and S-adenosyl-L-homocysteine into 5-methylthioinosine and S-inosyl-L-homocysteine, respectively. Is also able to deaminate adenosine. The protein is 5-methylthioadenosine/S-adenosylhomocysteine deaminase of Desulfitobacterium hafniense (strain DSM 10664 / DCB-2).